We begin with the raw amino-acid sequence, 398 residues long: Mitochondrial protein import protein mas5 (398 aa).

A J domain is found at glycine 7–methionine 88. The CR-type zinc finger occupies glycine 139 to lysine 219. Phenylalanine 144 to valine 146 serves as a coordination point for substrate. The Zn(2+) site is built by cysteine 152, cysteine 155, cysteine 166, cysteine 169, cysteine 192, cysteine 195, cysteine 207, and cysteine 210. 4 CXXCXGXG motif repeats span residues cysteine 152–glycine 159, cysteine 166–glycine 173, cysteine 192–glycine 199, and cysteine 207–glutamate 214. Substrate contacts are provided by residues methionine 221–phenylalanine 222 and valine 253–phenylalanine 255. Residues phenylalanine 367–glutamine 386 form a disordered region.

The protein belongs to the DnaJ family. Homodimer. It depends on Zn(2+) as a cofactor.

It is found in the cytoplasm. Its function is as follows. Probably involved in mitosomal protein import. The sequence is that of Mitochondrial protein import protein mas5 (MAS5) from Encephalitozoon cuniculi (strain GB-M1) (Microsporidian parasite).